The sequence spans 431 residues: Enolase (431 aa).

Gln167 provides a ligand contact to (2R)-2-phosphoglycerate. Residue Glu209 is the Proton donor of the active site. Mg(2+)-binding residues include Asp246, Glu287, and Asp314. 4 residues coordinate (2R)-2-phosphoglycerate: Lys339, Arg368, Ser369, and Lys390. Lys339 serves as the catalytic Proton acceptor.

Belongs to the enolase family. Mg(2+) is required as a cofactor.

Its subcellular location is the cytoplasm. It is found in the secreted. It localises to the cell surface. The enzyme catalyses (2R)-2-phosphoglycerate = phosphoenolpyruvate + H2O. It functions in the pathway carbohydrate degradation; glycolysis; pyruvate from D-glyceraldehyde 3-phosphate: step 4/5. In terms of biological role, catalyzes the reversible conversion of 2-phosphoglycerate (2-PG) into phosphoenolpyruvate (PEP). It is essential for the degradation of carbohydrates via glycolysis. This Prochlorococcus marinus (strain MIT 9303) protein is Enolase.